A 135-amino-acid polypeptide reads, in one-letter code: Immunity protein RhsIA (135 aa).

Residues 58–77 form a disordered region; sequence RKQGRQISLSCGEPPEYSPD.

Functionally, immunity component of a toxin-immunity protein module, which functions as a cellular contact-dependent growth inhibition (CDI) system. Specifically inhibits its cognate toxin RhsA. Cell contact is necessary for growth inhibition. The sequence is that of Immunity protein RhsIA (rhsIA) from Dickeya dadantii (strain 3937) (Erwinia chrysanthemi (strain 3937)).